We begin with the raw amino-acid sequence, 533 residues long: CTP synthase (533 aa).

An amidoligase domain region spans residues 1–265; the sequence is MTKFIFVTGG…ARYLVRRLGL (265 aa). Residue Ser13 participates in CTP binding. Residue Ser13 coordinates UTP. ATP is bound at residue 14–19; the sequence is GLGKGI. Tyr54 contacts L-glutamine. Residue Asp71 coordinates ATP. Positions 71 and 139 each coordinate Mg(2+). CTP-binding positions include 146–148, 186–191, and Lys222; these read DIE and KTKPTQ. Residues 186–191 and Lys222 contribute to the UTP site; that span reads KTKPTQ. The region spanning 290–532 is the Glutamine amidotransferase type-1 domain; the sequence is EIAIVGKYVK…VRAARERKYG (243 aa). Position 351 (Gly351) interacts with L-glutamine. Cys378 (nucleophile; for glutamine hydrolysis) is an active-site residue. L-glutamine contacts are provided by residues 379–382, Glu402, and Arg459; that span reads FGFQ. Residues His505 and Glu507 contribute to the active site.

It belongs to the CTP synthase family. Homotetramer.

The catalysed reaction is UTP + L-glutamine + ATP + H2O = CTP + L-glutamate + ADP + phosphate + 2 H(+). It carries out the reaction L-glutamine + H2O = L-glutamate + NH4(+). It catalyses the reaction UTP + NH4(+) + ATP = CTP + ADP + phosphate + 2 H(+). The protein operates within pyrimidine metabolism; CTP biosynthesis via de novo pathway; CTP from UDP: step 2/2. With respect to regulation, allosterically activated by GTP, when glutamine is the substrate; GTP has no effect on the reaction when ammonia is the substrate. The allosteric effector GTP functions by stabilizing the protein conformation that binds the tetrahedral intermediate(s) formed during glutamine hydrolysis. Inhibited by the product CTP, via allosteric rather than competitive inhibition. Its function is as follows. Catalyzes the ATP-dependent amination of UTP to CTP with either L-glutamine or ammonia as the source of nitrogen. Regulates intracellular CTP levels through interactions with the four ribonucleotide triphosphates. The protein is CTP synthase of Thermococcus gammatolerans (strain DSM 15229 / JCM 11827 / EJ3).